Consider the following 473-residue polypeptide: MKTLYSLRRFYPVETLFNGTLALAGRDQETTGFAWWAGNARLINLSGKLLGAHVAHAGLIVFWAGGMNLFEVAHFVPEKPMYEQGLILLPHLATLGWGVGPGGEVIDTFPYFVSGVLHLISSAVLGFGGIYHALLGPETLEESFPFFGYVWKDRNKMTTILGIHLILLGIGAFLLVFKALYFGGVYDTWAPGGGDVRKITNLTLNPSIIFGYLLKSPFGGEGWIVSVDDLEDIIGGHVWLGSICIFGGIWHILTKPFAWARRALVWSGEAYLSYSLAALSVFGFIACCFVWFNNTAYPSEFYGPTGPEASQAQAFTFLVRDQRLGANVGSAQGPTGLGKYLMRSPTGEVIFGGETMRFWDLRAPWLEPLRGPNGLDLSRLKKDIQPWQERRSAEYMTHAPLGSLNSVGGVATEINAVNYVSPRSWLATSHFVLGFFLFVGHLWHAGRARAAAAGFEKGIDRDFEPVLSMTPLN.

The propeptide occupies 1 to 14; it reads MKTLYSLRRFYPVE. The residue at position 15 (Thr-15) is an N-acetylthreonine. Position 15 is a phosphothreonine (Thr-15). 5 consecutive transmembrane segments (helical) span residues 69-93, 134-155, 178-200, 255-275, and 291-312; these read LFEV…PHLA, LLGP…KDRN, KALY…RKIT, KPFA…LSYS, and WFNN…ASQA. Glu-367 contributes to the [CaMn4O5] cluster binding site. Residues 447–471 traverse the membrane as a helical segment; sequence RARAAAAGFEKGIDRDFEPVLSMTP.

Belongs to the PsbB/PsbC family. PsbC subfamily. PSII is composed of 1 copy each of membrane proteins PsbA, PsbB, PsbC, PsbD, PsbE, PsbF, PsbH, PsbI, PsbJ, PsbK, PsbL, PsbM, PsbT, PsbX, PsbY, PsbZ, Psb30/Ycf12, at least 3 peripheral proteins of the oxygen-evolving complex and a large number of cofactors. It forms dimeric complexes. Binds multiple chlorophylls and provides some of the ligands for the Ca-4Mn-5O cluster of the oxygen-evolving complex. It may also provide a ligand for a Cl- that is required for oxygen evolution. PSII binds additional chlorophylls, carotenoids and specific lipids. serves as cofactor.

The protein resides in the plastid. The protein localises to the chloroplast thylakoid membrane. Functionally, one of the components of the core complex of photosystem II (PSII). It binds chlorophyll and helps catalyze the primary light-induced photochemical processes of PSII. PSII is a light-driven water:plastoquinone oxidoreductase, using light energy to abstract electrons from H(2)O, generating O(2) and a proton gradient subsequently used for ATP formation. In Daucus carota (Wild carrot), this protein is Photosystem II CP43 reaction center protein.